We begin with the raw amino-acid sequence, 242 residues long: Uridylate kinase (242 aa).

Residue 15-18 coordinates ATP; sequence KLSG. The tract at residues 23–28 is involved in allosteric activation by GTP; the sequence is GDEGFG. UMP is bound at residue Gly-57. The ATP site is built by Gly-58 and Arg-62. UMP is bound by residues Asp-77 and 138-145; that span reads TGNPFCTT. Residues Thr-165, Tyr-171, and Asp-174 each contribute to the ATP site.

This sequence belongs to the UMP kinase family. As to quaternary structure, homohexamer.

It localises to the cytoplasm. It carries out the reaction UMP + ATP = UDP + ADP. It participates in pyrimidine metabolism; CTP biosynthesis via de novo pathway; UDP from UMP (UMPK route): step 1/1. Its activity is regulated as follows. Allosterically activated by GTP. Inhibited by UTP. Functionally, catalyzes the reversible phosphorylation of UMP to UDP. The sequence is that of Uridylate kinase from Shewanella sp. (strain ANA-3).